A 273-amino-acid chain; its full sequence is Glutamate 5-kinase (273 aa).

K15 is a binding site for ATP. The substrate site is built by S55, D142, and N158. Residues 178-179 (SD) and 220-226 (TGGMLSK) each bind ATP.

The protein belongs to the glutamate 5-kinase family.

It is found in the cytoplasm. It carries out the reaction L-glutamate + ATP = L-glutamyl 5-phosphate + ADP. The protein operates within amino-acid biosynthesis; L-proline biosynthesis; L-glutamate 5-semialdehyde from L-glutamate: step 1/2. Its function is as follows. Catalyzes the transfer of a phosphate group to glutamate to form L-glutamate 5-phosphate. This chain is Glutamate 5-kinase, found in Streptococcus pyogenes serotype M18 (strain MGAS8232).